An 81-amino-acid chain; its full sequence is Small ribosomal subunit protein bS16 (81 aa).

It belongs to the bacterial ribosomal protein bS16 family.

The chain is Small ribosomal subunit protein bS16 from Teredinibacter turnerae (strain ATCC 39867 / T7901).